Consider the following 207-residue polypeptide: MDNEKGLLIVLSGPSGVGKGTVRKEIFDDPTTSYKYSVSMTTRNMREGEVDGVDYFFKTKEEFEALIQEDQFIEYAEYVGNYYGTPVQYVKDTMAAGHDVFLEIEVEGAKQVRKKFPDALFIFLAPPSLDHLKERLVGRGTESDEKIQSRVNEARKEVEMMNLYDYVVVNDEVHLAKERIQSIVEAEHLKRERVEAIYRKMLLEAKK.

In terms of domain architecture, Guanylate kinase-like spans 6–185 (GLLIVLSGPS…AKERIQSIVE (180 aa)). Position 13-20 (13-20 (GPSGVGKG)) interacts with ATP.

Belongs to the guanylate kinase family.

The protein localises to the cytoplasm. The catalysed reaction is GMP + ATP = GDP + ADP. Its function is as follows. Essential for recycling GMP and indirectly, cGMP. The sequence is that of Guanylate kinase from Staphylococcus haemolyticus (strain JCSC1435).